The sequence spans 165 residues: Lipoprotein signal peptidase (165 aa).

2 helical membrane passes run 64–84 and 88–108; these read LGRWLLVGVAVLAAAALGAWM and GSRLLVLSLGLIVGGAVGNAV. Residues aspartate 118 and aspartate 136 contribute to the active site. Residues 128–148 form a helical membrane-spanning segment; sequence SWYVFNVADAGIVAGVAGLLV.

The protein belongs to the peptidase A8 family.

Its subcellular location is the cell inner membrane. It catalyses the reaction Release of signal peptides from bacterial membrane prolipoproteins. Hydrolyzes -Xaa-Yaa-Zaa-|-(S,diacylglyceryl)Cys-, in which Xaa is hydrophobic (preferably Leu), and Yaa (Ala or Ser) and Zaa (Gly or Ala) have small, neutral side chains.. It participates in protein modification; lipoprotein biosynthesis (signal peptide cleavage). This protein specifically catalyzes the removal of signal peptides from prolipoproteins. The chain is Lipoprotein signal peptidase from Methylobacterium sp. (strain 4-46).